The sequence spans 80 residues: Kappa-actitoxin-Avd4f (80 aa).

A signal peptide spans Met1–Ala19. Residues Ala20–Phe31 constitute a propeptide that is removed on maturation. Cystine bridges form between Cys41–Cys76, Cys43–Cys69, and Cys59–Cys77.

Belongs to the sea anemone type 3 (BDS) potassium channel toxin family. In terms of tissue distribution, moderately expressed in the ectodermal tissue from the distal and proximal tentacles, body wall, and oral disk.

It localises to the secreted. The protein resides in the nematocyst. In terms of biological role, blocks Kv3 voltage-gated potassium channels. Reduces blood pressure. The protein is Kappa-actitoxin-Avd4f of Anemonia viridis (Snakelocks anemone).